The primary structure comprises 194 residues: uncharacterized protein (194 aa).

Positions 6–66 (SGKYEKILQA…AIAENLLTHT (61 aa)) constitute an HTH tetR-type domain. The segment at residues 29 to 48 (SISDIVKKAGTAQGTFYLYF) is a DNA-binding region (H-T-H motif).

This is an uncharacterized protein from Bacillus subtilis (strain 168).